We begin with the raw amino-acid sequence, 537 residues long: Glutamyl-tRNA reductase, chloroplastic (537 aa).

The transit peptide at 1 to 48 (MMASTTSATAAGGAFAAAKTRAGSSAAGGGACARVAAGGRRRSGVVVR) directs the protein to the chloroplast. Residues 134–137 (TCNR), Ser-194, 199–201 (EGQ), and Gln-205 each bind substrate. Cys-135 (nucleophile) is an active-site residue. NADP(+) is bound at residue 276 to 281 (GAGKMG).

This sequence belongs to the glutamyl-tRNA reductase family.

The protein resides in the plastid. It localises to the chloroplast. The catalysed reaction is (S)-4-amino-5-oxopentanoate + tRNA(Glu) + NADP(+) = L-glutamyl-tRNA(Glu) + NADPH + H(+). It participates in porphyrin-containing compound metabolism; protoporphyrin-IX biosynthesis; 5-aminolevulinate from L-glutamyl-tRNA(Glu): step 1/2. In terms of biological role, catalyzes the NADPH-dependent reduction of glutamyl-tRNA(Glu) to glutamate 1-semialdehyde (GSA). This is Glutamyl-tRNA reductase, chloroplastic from Oryza sativa subsp. indica (Rice).